The sequence spans 212 residues: Histone H1.2 (212 aa).

Residues 1-17 (MSEAAPAAPAAAPPAEK) are compositionally biased toward low complexity. Positions 1-41 (MSEAAPAAPAAAPPAEKAPAKKKAAKKPAGVRRKASGPPVS) are disordered. At serine 2 the chain carries N-acetylserine. Serine 2 is subject to Phosphoserine. Lysine 17 carries the post-translational modification N6-acetyllysine. Positions 20–35 (AKKKAAKKPAGVRRKA) are enriched in basic residues. 3 positions are modified to N6-(2-hydroxyisobutyryl)lysine: lysine 23, lysine 26, and lysine 27. Position 34 is an N6-(beta-hydroxybutyryl)lysine; alternate (lysine 34). An N6-crotonyllysine; alternate modification is found at lysine 34. N6-methyllysine; alternate is present on lysine 34. In terms of domain architecture, H15 spans 36–109 (SGPPVSELIT…GASGSFKLNK (74 aa)). Lysine 46 carries the post-translational modification N6-(2-hydroxyisobutyryl)lysine. Position 52 is an N6-(beta-hydroxybutyryl)lysine; alternate (lysine 52). At lysine 52 the chain carries N6-(2-hydroxyisobutyryl)lysine; alternate. At arginine 54 the chain carries Citrulline. The residue at position 63 (lysine 63) is an N6-(2-hydroxyisobutyryl)lysine. Lysine 64 bears the N6-(beta-hydroxybutyryl)lysine; alternate mark. At lysine 64 the chain carries N6-crotonyllysine; alternate. An N6-(2-hydroxyisobutyryl)lysine; alternate modification is found at lysine 64. An N6-(2-hydroxyisobutyryl)lysine mark is found at lysine 75 and lysine 81. Residues lysine 85 and lysine 90 each carry the N6-(beta-hydroxybutyryl)lysine; alternate modification. An N6-crotonyllysine; alternate mark is found at lysine 85, lysine 90, and lysine 97. 3 positions are modified to N6-(2-hydroxyisobutyryl)lysine; alternate: lysine 85, lysine 90, and lysine 97. Lysine 97 is modified (N6-succinyllysine; alternate). Residues 98 to 212 (GTGASGSFKL…KAKKVAAKKK (115 aa)) form a disordered region. Serine 104 is modified (phosphoserine; by PKC). Lysine 106 is subject to N6-(beta-hydroxybutyryl)lysine. Lysine 110, lysine 117, lysine 121, lysine 129, and lysine 136 each carry N6-(2-hydroxyisobutyryl)lysine. Positions 121–148 (KKAGAAKAKKPAGAAKKPKKATGAATPK) are enriched in low complexity. Threonine 146 carries the phosphothreonine modification. N6-(2-hydroxyisobutyryl)lysine is present on lysine 148. The segment covering 149 to 160 (KAAKKTPKKAKK) has biased composition (basic residues). Residues lysine 159 and lysine 168 each carry the N6-crotonyllysine; alternate modification. Residues lysine 159 and lysine 168 each carry the N6-(2-hydroxyisobutyryl)lysine; alternate modification. A compositionally biased stretch (basic residues) spans 169–212 (KVAKSPKKAKVTKPKKVKSASKAVKPKAAKPKVAKAKKVAAKKK). Lysine 186 is modified (N6-methyllysine; by EHMT1 and EHMT2). An ADP-ribosylserine modification is found at serine 187. Residue lysine 212 is modified to N6-(2-hydroxyisobutyryl)lysine.

It belongs to the histone H1/H5 family. As to quaternary structure, interacts with TSC22D1 isoform 2. Post-translationally, H1 histones are progressively phosphorylated during the cell cycle, becoming maximally phosphorylated during late G2 phase and M phase, and being dephosphorylated sharply thereafter. In terms of processing, crotonylation (Kcr) is specifically present in male germ cells and marks testis-specific genes in post-meiotic cells, including X-linked genes that escape sex chromosome inactivation in haploid cells. Crotonylation marks active promoters and enhancers and confers resistance to transcriptional repressors. It is also associated with post-meiotically activated genes on autosomes. ADP-ribosylated on Ser-187 in response to DNA damage. Post-translationally, citrullination at Arg-54 (H1R54ci) by PADI4 takes place within the DNA-binding site of H1 and results in its displacement from chromatin and global chromatin decondensation, thereby promoting pluripotency and stem cell maintenance. In terms of processing, hydroxybutyrylation of histones is induced by starvation.

The protein localises to the nucleus. The protein resides in the chromosome. Its function is as follows. Histone H1 protein binds to linker DNA between nucleosomes forming the macromolecular structure known as the chromatin fiber. Histones H1 are necessary for the condensation of nucleosome chains into higher-order structured fibers. Also acts as a regulator of individual gene transcription through chromatin remodeling, nucleosome spacing and DNA methylation. This chain is Histone H1.2, found in Mus musculus (Mouse).